Here is a 256-residue protein sequence, read N- to C-terminus: Imidazole glycerol phosphate synthase subunit HisF (256 aa).

Active-site residues include aspartate 12 and aspartate 131.

Belongs to the HisA/HisF family. As to quaternary structure, heterodimer of HisH and HisF.

It localises to the cytoplasm. It carries out the reaction 5-[(5-phospho-1-deoxy-D-ribulos-1-ylimino)methylamino]-1-(5-phospho-beta-D-ribosyl)imidazole-4-carboxamide + L-glutamine = D-erythro-1-(imidazol-4-yl)glycerol 3-phosphate + 5-amino-1-(5-phospho-beta-D-ribosyl)imidazole-4-carboxamide + L-glutamate + H(+). The protein operates within amino-acid biosynthesis; L-histidine biosynthesis; L-histidine from 5-phospho-alpha-D-ribose 1-diphosphate: step 5/9. Functionally, IGPS catalyzes the conversion of PRFAR and glutamine to IGP, AICAR and glutamate. The HisF subunit catalyzes the cyclization activity that produces IGP and AICAR from PRFAR using the ammonia provided by the HisH subunit. The sequence is that of Imidazole glycerol phosphate synthase subunit HisF from Pseudomonas fluorescens (strain SBW25).